Reading from the N-terminus, the 381-residue chain is Na(+)/H(+) antiporter NhaA 1 (381 aa).

Helical transmembrane passes span 18 to 38, 53 to 73, 89 to 109, 118 to 138, 147 to 167, 170 to 190, 210 to 230, 251 to 271, 283 to 303, 321 to 341, and 348 to 368; these read GLLL…SYSA, ITHW…GLEL, SLPI…FLAL, GAGI…SLLG, VFLT…IAVF, TSIG…LFVL, YFML…AFVI, PVAF…AIES, FGII…FSSI, ILGA…ITLL, and IIVF…ITGF.

The protein belongs to the NhaA Na(+)/H(+) (TC 2.A.33) antiporter family.

Its subcellular location is the cell inner membrane. The catalysed reaction is Na(+)(in) + 2 H(+)(out) = Na(+)(out) + 2 H(+)(in). Its function is as follows. Na(+)/H(+) antiporter that extrudes sodium in exchange for external protons. The polypeptide is Na(+)/H(+) antiporter NhaA 1 (Flavobacterium johnsoniae (strain ATCC 17061 / DSM 2064 / JCM 8514 / BCRC 14874 / CCUG 350202 / NBRC 14942 / NCIMB 11054 / UW101) (Cytophaga johnsonae)).